We begin with the raw amino-acid sequence, 329 residues long: DNA-directed RNA polymerase subunit alpha (329 aa).

The segment at 1-235 (MVREKVKVST…DLFIPFLHTE (235 aa)) is alpha N-terminal domain (alpha-NTD). The tract at residues 269-329 (IALKYIFIDQ…KQILGILEKK (61 aa)) is alpha C-terminal domain (alpha-CTD).

Belongs to the RNA polymerase alpha chain family. In terms of assembly, in plastids the minimal PEP RNA polymerase catalytic core is composed of four subunits: alpha, beta, beta', and beta''. When a (nuclear-encoded) sigma factor is associated with the core the holoenzyme is formed, which can initiate transcription.

The protein resides in the plastid. It localises to the chloroplast. It carries out the reaction RNA(n) + a ribonucleoside 5'-triphosphate = RNA(n+1) + diphosphate. Functionally, DNA-dependent RNA polymerase catalyzes the transcription of DNA into RNA using the four ribonucleoside triphosphates as substrates. This is DNA-directed RNA polymerase subunit alpha from Gossypium hirsutum (Upland cotton).